Consider the following 194-residue polypeptide: MSKVDVVDILKKSDALLEGHFLLSSGKHSNRYVQCAKVLRFPEYAAEVLSTVVEQIKDLDIDLVVGPAMGGVIVSYELGRQLGKEAVFTERKDNTMELRRGFEVKKGAKIIIAEDVVTTGKSTMETKRVLEALGGEVVGVACIADRTNHDIGMPIYSAIKLDIQVYESDECPLCKEGKLPVVKPGSREFKELGM.

114-122 (EDVVTTGKS) is a 5-phospho-alpha-D-ribose 1-diphosphate binding site. Orotate is bound by residues T118 and R146.

It belongs to the purine/pyrimidine phosphoribosyltransferase family. PyrE subfamily. Homodimer. Mg(2+) is required as a cofactor.

The enzyme catalyses orotidine 5'-phosphate + diphosphate = orotate + 5-phospho-alpha-D-ribose 1-diphosphate. The protein operates within pyrimidine metabolism; UMP biosynthesis via de novo pathway; UMP from orotate: step 1/2. Its function is as follows. Catalyzes the transfer of a ribosyl phosphate group from 5-phosphoribose 1-diphosphate to orotate, leading to the formation of orotidine monophosphate (OMP). The polypeptide is Orotate phosphoribosyltransferase (Clostridioides difficile (strain 630) (Peptoclostridium difficile)).